Reading from the N-terminus, the 127-residue chain is Small ribosomal subunit protein eS8 (127 aa).

It belongs to the eukaryotic ribosomal protein eS8 family. As to quaternary structure, part of the 30S ribosomal subunit.

The sequence is that of Small ribosomal subunit protein eS8 (rps8e) from Pyrococcus abyssi (strain GE5 / Orsay).